Reading from the N-terminus, the 258-residue chain is MYRLYWLDEHNPRSPFPPAEQAMDEPNGLLAVGGDLSPVRLEQAYRRGIFPWYGPGQPILWWSPDPRCIFRPGWLHVSRRLARRLRTGAFRMSLDTDFTGVISACAAPREDQAGTWIVPEMMHAYEALFELGIAHSVECWDRDGELVGGLYGVALSGAFFGESMFSRRSDASKACMAWLSAQLHRWGFALFDCQVSSPHLRRMGAVDVSRSRFLAQLQQALVLPHRRGPWRFDRDLDPVAIHRQHQTRTTAPEVLYGS.

Belongs to the L/F-transferase family.

It localises to the cytoplasm. The enzyme catalyses N-terminal L-lysyl-[protein] + L-leucyl-tRNA(Leu) = N-terminal L-leucyl-L-lysyl-[protein] + tRNA(Leu) + H(+). It carries out the reaction N-terminal L-arginyl-[protein] + L-leucyl-tRNA(Leu) = N-terminal L-leucyl-L-arginyl-[protein] + tRNA(Leu) + H(+). It catalyses the reaction L-phenylalanyl-tRNA(Phe) + an N-terminal L-alpha-aminoacyl-[protein] = an N-terminal L-phenylalanyl-L-alpha-aminoacyl-[protein] + tRNA(Phe). Functions in the N-end rule pathway of protein degradation where it conjugates Leu, Phe and, less efficiently, Met from aminoacyl-tRNAs to the N-termini of proteins containing an N-terminal arginine or lysine. The chain is Leucyl/phenylalanyl-tRNA--protein transferase from Alkalilimnicola ehrlichii (strain ATCC BAA-1101 / DSM 17681 / MLHE-1).